The sequence spans 94 residues: Large ribosomal subunit protein uL23 (94 aa).

It belongs to the universal ribosomal protein uL23 family. As to quaternary structure, part of the 50S ribosomal subunit. Contacts protein L29, and trigger factor when it is bound to the ribosome.

Functionally, one of the early assembly proteins it binds 23S rRNA. One of the proteins that surrounds the polypeptide exit tunnel on the outside of the ribosome. Forms the main docking site for trigger factor binding to the ribosome. The sequence is that of Large ribosomal subunit protein uL23 from Geobacter sulfurreducens (strain ATCC 51573 / DSM 12127 / PCA).